Reading from the N-terminus, the 323-residue chain is Aldo-keto reductase family 1 member C4 (323 aa).

NADP(+) contacts are provided by residues 20-24 (GFGSY) and aspartate 50. Tyrosine 55 functions as the Proton donor in the catalytic mechanism. Histidine 117 provides a ligand contact to substrate. NADP(+) contacts are provided by residues 166–167 (SN), glutamine 190, 216–221 (HSALGT), and 270–280 (KSYNEQRIREN).

It belongs to the aldo/keto reductase family. Monomer. In terms of tissue distribution, high expression in liver. Also expressed in kidney.

The protein localises to the cytoplasm. Its subcellular location is the cytosol. It carries out the reaction chlordecone alcohol + NADP(+) = chlordecone + NADPH + H(+). The enzyme catalyses a 3alpha-hydroxysteroid + NADP(+) = a 3-oxosteroid + NADPH + H(+). The catalysed reaction is a 3alpha-hydroxysteroid + NAD(+) = a 3-oxosteroid + NADH + H(+). It catalyses the reaction 5alpha-androstane-3alpha,17beta-diol + NADP(+) = 17beta-hydroxy-5alpha-androstan-3-one + NADPH + H(+). It carries out the reaction 5alpha-androstane-3beta,17beta-diol + NADP(+) = 17beta-hydroxy-5alpha-androstan-3-one + NADPH + H(+). The enzyme catalyses 5alpha-androstane-3alpha,17beta-diol + NAD(+) = 17beta-hydroxy-5alpha-androstan-3-one + NADH + H(+). The catalysed reaction is 17beta-estradiol + NADP(+) = estrone + NADPH + H(+). It catalyses the reaction 17beta-estradiol + NAD(+) = estrone + NADH + H(+). It carries out the reaction (20S)-hydroxypregn-4-en-3-one + NADP(+) = progesterone + NADPH + H(+). The enzyme catalyses (20S)-hydroxypregn-4-en-3-one + NAD(+) = progesterone + NADH + H(+). The catalysed reaction is androsterone + NADP(+) = 5alpha-androstan-3,17-dione + NADPH + H(+). It catalyses the reaction testosterone + NADP(+) = androst-4-ene-3,17-dione + NADPH + H(+). It carries out the reaction testosterone + NAD(+) = androst-4-ene-3,17-dione + NADH + H(+). The enzyme catalyses 3alpha-hydroxy-5alpha-androstane 17-O-(beta-D-glucuronate) + NADP(+) = 5alpha-dihydrotestosterone 17-O-(beta-D-glucuronate) + NADPH + H(+). The catalysed reaction is (3beta,5alpha,17beta)-3-hydroxy-androstan-17-yl sulfate + NADP(+) = 5alpha-dihydrotestosterone sulfate + NADPH + H(+). It catalyses the reaction 5alpha-androstane-3alpha,17beta-diol + NAD(+) = androsterone + NADH + H(+). It functions in the pathway steroid metabolism. Potently inhibited by benzbromarone, 3',3'',5',5''-tetrabromophenolphthalein (TBPP) and o-cresolphthalein. Cytosolic aldo-keto reductase that catalyzes the NADH and NADPH-dependent reduction of ketosteroids to hydroxysteroids. Liver specific enzyme that acts as an NAD(P)(H)-dependent 3-, 17- and 20-ketosteroid reductase on the steroid nucleus and side chain. Displays the ability to catalyze both oxidation and reduction in vitro, but most probably acts as a reductase in vivo since the oxidase activity measured in vitro is inhibited by physiological concentration of NADPH. Acts preferentially as a 3-alpha-hydroxysteroid dehydrogenase (HSD) with a subsidiary 3-beta-HSD activity. Catalyzes efficiently the transformation of the potent androgen 5-alpha-dihydrotestosterone (5alpha-DHT or 17beta-hydroxy-5alpha-androstan-3-one) into the less active form, 5-alpha-androstan-3-alpha,17-beta-diol (3-alpha-diol). Catalyzes the reduction of estrone into 17beta-estradiol but with low efficiency. Metabolizes a broad spectrum of natural and synthetic therapeutic steroid and plays an important role in metabolism of androgens, estrogens, progestereone and conjugated steroids. Catalyzes the biotransformation of the pesticide chlordecone (kepone) to its corresponding alcohol leading to increased biliary excretion of the pesticide and concomitant reduction of its neurotoxicity since bile is the major excretory route. The chain is Aldo-keto reductase family 1 member C4 (AKR1C4) from Macaca fuscata fuscata (Japanese macaque).